The chain runs to 299 residues: MSWIDRIFSKNTTSNSKKSNVPEGVWTKCTSCEQVLYRDELKRHLEVCPKCGHHMRIDARERLVALLDKDSIVEIAADLEPKDILKFRDLKKYKDRLSAAQKETGEKDALITVSATLYGMPIVVAALNFSFMGGSMGSVVGSKFVQAAEKAIELHCPLVCFSASGGARMQEALFSLMQMAKTSAVLAKMKEKGVPFISVLTDPTLGGVSASFAMLGDINIAEPKALIGFAGPRVIEQTVREKLPEGFQRSEFLLEHGAIDMIVKRSEMRETLANLLSKLMNMPSPFVEPELIQEKSDDV.

One can recognise a CoA carboxyltransferase N-terminal domain in the interval Val-25–Glu-294. Zn(2+) is bound by residues Cys-29, Cys-32, Cys-48, and Cys-51. A C4-type zinc finger spans residues Cys-29–Cys-51.

It belongs to the AccD/PCCB family. As to quaternary structure, acetyl-CoA carboxylase is a heterohexamer composed of biotin carboxyl carrier protein (AccB), biotin carboxylase (AccC) and two subunits each of ACCase subunit alpha (AccA) and ACCase subunit beta (AccD). Zn(2+) serves as cofactor.

It is found in the cytoplasm. It carries out the reaction N(6)-carboxybiotinyl-L-lysyl-[protein] + acetyl-CoA = N(6)-biotinyl-L-lysyl-[protein] + malonyl-CoA. It functions in the pathway lipid metabolism; malonyl-CoA biosynthesis; malonyl-CoA from acetyl-CoA: step 1/1. Functionally, component of the acetyl coenzyme A carboxylase (ACC) complex. Biotin carboxylase (BC) catalyzes the carboxylation of biotin on its carrier protein (BCCP) and then the CO(2) group is transferred by the transcarboxylase to acetyl-CoA to form malonyl-CoA. The protein is Acetyl-coenzyme A carboxylase carboxyl transferase subunit beta of Histophilus somni (strain 129Pt) (Haemophilus somnus).